A 132-amino-acid polypeptide reads, in one-letter code: UPF0060 membrane protein SG1469 (132 aa).

3 helical membrane-spanning segments follow: residues 5-25, 32-52, and 60-80; these read VLLY…PYCY, LLLI…VLYP, and AAYG…IDGI.

Belongs to the UPF0060 family.

The protein localises to the cell inner membrane. The polypeptide is UPF0060 membrane protein SG1469 (Sodalis glossinidius (strain morsitans)).